The following is a 195-amino-acid chain: Imidazoleglycerol-phosphate dehydratase (195 aa).

It belongs to the imidazoleglycerol-phosphate dehydratase family.

Its subcellular location is the cytoplasm. It catalyses the reaction D-erythro-1-(imidazol-4-yl)glycerol 3-phosphate = 3-(imidazol-4-yl)-2-oxopropyl phosphate + H2O. The protein operates within amino-acid biosynthesis; L-histidine biosynthesis; L-histidine from 5-phospho-alpha-D-ribose 1-diphosphate: step 6/9. The protein is Imidazoleglycerol-phosphate dehydratase of Methylobacterium radiotolerans (strain ATCC 27329 / DSM 1819 / JCM 2831 / NBRC 15690 / NCIMB 10815 / 0-1).